The chain runs to 242 residues: Uridylate kinase (242 aa).

15-18 (KLSG) provides a ligand contact to ATP. The segment at 23-28 (GDEGFG) is involved in allosteric activation by GTP. Residue glycine 57 participates in UMP binding. The ATP site is built by glycine 58 and arginine 62. Residues aspartate 77 and 138–145 (TGNPFCTT) contribute to the UMP site. Residues threonine 165, tyrosine 171, and aspartate 174 each contribute to the ATP site.

Belongs to the UMP kinase family. In terms of assembly, homohexamer.

The protein resides in the cytoplasm. The catalysed reaction is UMP + ATP = UDP + ADP. It participates in pyrimidine metabolism; CTP biosynthesis via de novo pathway; UDP from UMP (UMPK route): step 1/1. With respect to regulation, allosterically activated by GTP. Inhibited by UTP. Catalyzes the reversible phosphorylation of UMP to UDP. The protein is Uridylate kinase of Shewanella sp. (strain MR-4).